The following is a 546-amino-acid chain: Fusion glycoprotein F0 (546 aa).

The N-terminal stretch at 1–19 (MKILFATLLVVTTPHLVTG) is a signal peptide. The Extracellular segment spans residues 20–491 (QIHWGNLSKI…TIKGASVTNT (472 aa)). Residues Asn-25, Asn-57, and Asn-63 are each glycosylated (N-linked (GlcNAc...) asparagine; by host). Positions 109-133 (FAGVALAGAALGVATAAQITAGIAL) are fusion peptide. Residues 134-162 (HQSMMNTQAIESLKASLETTNQAIEEIRQ) are a coiled coil. 4 disulfide bridges follow: Cys-330–Cys-339, Cys-354–Cys-362, Cys-386–Cys-391, and Cys-393–Cys-416. Residues 458 to 483 (NLGNAVTKLEKAKDLLDSSDLILETI) are a coiled coil. Residues 492–512 (GHILVGAGLIAVVGILIVTCC) traverse the membrane as a helical segment. Over 513–546 (CRKRSNDSKVSTVILNPGLKPDLTGTSKSYVRSL) the chain is Cytoplasmic.

This sequence belongs to the paramyxoviruses fusion glycoprotein family. As to quaternary structure, homotrimer of disulfide-linked F1-F2. The inactive precursor F0 is glycosylated and proteolytically cleaved into F1 and F2 to be functionally active. The cleavage is mediated by cellular proteases during the transport and maturation of the polypeptide.

It localises to the virion membrane. The protein localises to the host cell membrane. Functionally, class I viral fusion protein. Under the current model, the protein has at least 3 conformational states: pre-fusion native state, pre-hairpin intermediate state, and post-fusion hairpin state. During viral and plasma cell membrane fusion, the heptad repeat (HR) regions assume a trimer-of-hairpins structure, positioning the fusion peptide in close proximity to the C-terminal region of the ectodomain. The formation of this structure appears to drive apposition and subsequent fusion of viral and plasma cell membranes. Directs fusion of viral and cellular membranes leading to delivery of the nucleocapsid into the cytoplasm. This fusion is pH independent and occurs directly at the outer cell membrane. The trimer of F1-F2 (F protein) probably interacts with HN at the virion surface. Upon HN binding to its cellular receptor, the hydrophobic fusion peptide is unmasked and interacts with the cellular membrane, inducing the fusion between cell and virion membranes. Later in infection, F proteins expressed at the plasma membrane of infected cells could mediate fusion with adjacent cells to form syncytia, a cytopathic effect that could lead to tissue necrosis. The protein is Fusion glycoprotein F0 (F) of Rinderpest virus (strain RBOK) (RDV).